Here is a 202-residue protein sequence, read N- to C-terminus: Type II restriction enzyme MunI (202 aa).

In terms of assembly, homodimer.

It carries out the reaction Endonucleolytic cleavage of DNA to give specific double-stranded fragments with terminal 5'-phosphates.. Its function is as follows. A P subtype restriction enzyme that recognizes the double-stranded sequence 5'-CAATTG-3' and cleaves after C-1. The protein is Type II restriction enzyme MunI of Mycoplasma sp.